Here is a 428-residue protein sequence, read N- to C-terminus: 2,3-bisphosphoglycerate-independent phosphoglycerate mutase 2 (428 aa).

This sequence belongs to the BPG-independent phosphoglycerate mutase family. A-PGAM subfamily.

It carries out the reaction (2R)-2-phosphoglycerate = (2R)-3-phosphoglycerate. The protein operates within carbohydrate degradation; glycolysis; pyruvate from D-glyceraldehyde 3-phosphate: step 3/5. Catalyzes the interconversion of 2-phosphoglycerate and 3-phosphoglycerate. This chain is 2,3-bisphosphoglycerate-independent phosphoglycerate mutase 2 (apgM2), found in Methanocaldococcus jannaschii (strain ATCC 43067 / DSM 2661 / JAL-1 / JCM 10045 / NBRC 100440) (Methanococcus jannaschii).